Consider the following 255-residue polypeptide: 1-(5-phosphoribosyl)-5-[(5-phosphoribosylamino)methylideneamino] imidazole-4-carboxamide isomerase (255 aa).

D8 serves as the catalytic Proton acceptor. D129 serves as the catalytic Proton donor.

Belongs to the HisA/HisF family.

Its subcellular location is the cytoplasm. The enzyme catalyses 1-(5-phospho-beta-D-ribosyl)-5-[(5-phospho-beta-D-ribosylamino)methylideneamino]imidazole-4-carboxamide = 5-[(5-phospho-1-deoxy-D-ribulos-1-ylimino)methylamino]-1-(5-phospho-beta-D-ribosyl)imidazole-4-carboxamide. It functions in the pathway amino-acid biosynthesis; L-histidine biosynthesis; L-histidine from 5-phospho-alpha-D-ribose 1-diphosphate: step 4/9. The chain is 1-(5-phosphoribosyl)-5-[(5-phosphoribosylamino)methylideneamino] imidazole-4-carboxamide isomerase from Prochlorococcus marinus (strain MIT 9312).